We begin with the raw amino-acid sequence, 395 residues long: Flap endonuclease 1 (395 aa).

Positions 1–104 (MGIKHLFQVI…GELAKRTARK (104 aa)) are N-domain. Asp34 lines the Mg(2+) pocket. Residues Arg47 and Arg70 each coordinate DNA. 5 residues coordinate Mg(2+): Asp86, Glu158, Glu160, Asp179, and Asp181. The I-domain stretch occupies residues 122-253 (EIEKFSRRTV…NTALKLIREH (132 aa)). DNA is bound at residue Glu158. Positions 231 and 233 each coordinate DNA. Asp233 contacts Mg(2+). Residues 341-349 (QQSRLEGFF) are interaction with PCNA. Residues 356 to 389 (DAEKASLKRKHDEKLQEQKKRKKEEAKAKKEAKA) are compositionally biased toward basic and acidic residues. The interval 356–395 (DAEKASLKRKHDEKLQEQKKRKKEEAKAKKEAKAKPRGAA) is disordered.

Belongs to the XPG/RAD2 endonuclease family. FEN1 subfamily. In terms of assembly, interacts with PCNA. Three molecules of fen1 bind to one PCNA trimer with each molecule binding to one PCNA monomer. PCNA stimulates the nuclease activity without altering cleavage specificity. The cofactor is Mg(2+). Phosphorylated. Phosphorylation upon DNA damage induces relocalization to the nuclear plasma.

The protein resides in the nucleus. It is found in the nucleolus. Its subcellular location is the nucleoplasm. It localises to the mitochondrion. Structure-specific nuclease with 5'-flap endonuclease and 5'-3' exonuclease activities involved in DNA replication and repair. During DNA replication, cleaves the 5'-overhanging flap structure that is generated by displacement synthesis when DNA polymerase encounters the 5'-end of a downstream Okazaki fragment. It enters the flap from the 5'-end and then tracks to cleave the flap base, leaving a nick for ligation. Also involved in the long patch base excision repair (LP-BER) pathway, by cleaving within the apurinic/apyrimidinic (AP) site-terminated flap. Acts as a genome stabilization factor that prevents flaps from equilibrating into structures that lead to duplications and deletions. Also possesses 5'-3' exonuclease activity on nicked or gapped double-stranded DNA, and exhibits RNase H activity. Also involved in replication and repair of rDNA and in repairing mitochondrial DNA. The protein is Flap endonuclease 1 (fen1) of Aspergillus clavatus (strain ATCC 1007 / CBS 513.65 / DSM 816 / NCTC 3887 / NRRL 1 / QM 1276 / 107).